A 329-amino-acid chain; its full sequence is Eukaryotic translation initiation factor 3 subunit I (329 aa).

5 WD repeats span residues 8–47 (GHQRAITQIKYNREGDLLFSAAKDSKPNVWWSLNGERLGT), 50–89 (GHGGVIWCLDVDWQSINLITGGGDSSCRLWDLETGKNIAT), 145–184 (ITDSKVTSMIWGSLDETIITGHEAGDLIQWDLRTGKKIHS), 187–226 (EHTHQITDMQLSRDGTMFVTASKDHTAKLFDTNSLELLKE), and 284–323 (GHFGPINSLAFHPDGKSYASGGEDGYVRVHNFDQSYFDYT).

Belongs to the eIF-3 subunit I family. Component of the eukaryotic translation initiation factor 3 (eIF-3) complex.

It localises to the cytoplasm. Functionally, component of the eukaryotic translation initiation factor 3 (eIF-3) complex, which is involved in protein synthesis of a specialized repertoire of mRNAs and, together with other initiation factors, stimulates binding of mRNA and methionyl-tRNAi to the 40S ribosome. The eIF-3 complex specifically targets and initiates translation of a subset of mRNAs involved in cell proliferation. The sequence is that of Eukaryotic translation initiation factor 3 subunit I from Bombyx mori (Silk moth).